Consider the following 1302-residue polypeptide: Phosphoribosylformylglycinamidine synthase (1302 aa).

Residues 307 to 318 and Ala-678 contribute to the ATP site; that span reads GASTGSGGEIRD. Residues Glu-718, Asn-722, and Asp-891 each coordinate Mg(2+). The region spanning 1049-1302 is the Glutamine amidotransferase type-1 domain; it reads MAILREQGVN…MFQNARKNIG (254 aa). Catalysis depends on Cys-1142, which acts as the Nucleophile. Catalysis depends on residues His-1267 and Glu-1269.

In the N-terminal section; belongs to the FGAMS family. In terms of assembly, monomer.

Its subcellular location is the cytoplasm. It carries out the reaction N(2)-formyl-N(1)-(5-phospho-beta-D-ribosyl)glycinamide + L-glutamine + ATP + H2O = 2-formamido-N(1)-(5-O-phospho-beta-D-ribosyl)acetamidine + L-glutamate + ADP + phosphate + H(+). It functions in the pathway purine metabolism; IMP biosynthesis via de novo pathway; 5-amino-1-(5-phospho-D-ribosyl)imidazole from N(2)-formyl-N(1)-(5-phospho-D-ribosyl)glycinamide: step 1/2. Its function is as follows. Phosphoribosylformylglycinamidine synthase involved in the purines biosynthetic pathway. Catalyzes the ATP-dependent conversion of formylglycinamide ribonucleotide (FGAR) and glutamine to yield formylglycinamidine ribonucleotide (FGAM) and glutamate. This chain is Phosphoribosylformylglycinamidine synthase, found in Vibrio parahaemolyticus serotype O3:K6 (strain RIMD 2210633).